The following is a 622-amino-acid chain: Low affinity potassium transport system protein Kup (622 aa).

A run of 12 helical transmembrane segments spans residues Leu-9–Leu-29, Val-49–Leu-69, Val-103–Ile-123, Pro-137–Ile-157, Val-165–Leu-185, Val-213–Ala-233, Trp-247–Leu-267, Pro-276–Ala-296, Ile-337–Phe-357, Leu-363–Thr-383, Phe-396–Leu-416, and Leu-419–Thr-439.

It belongs to the HAK/KUP transporter (TC 2.A.72) family.

It localises to the cell inner membrane. The catalysed reaction is K(+)(in) + H(+)(in) = K(+)(out) + H(+)(out). Responsible for the low-affinity transport of potassium into the cell. Likely operates as a K(+):H(+) symporter. In Salmonella typhi, this protein is Low affinity potassium transport system protein Kup.